Here is a 157-residue protein sequence, read N- to C-terminus: S-ribosylhomocysteine lyase (157 aa).

Positions 60, 64, and 127 each coordinate Fe cation.

It belongs to the LuxS family. In terms of assembly, homodimer. Fe cation is required as a cofactor.

The enzyme catalyses S-(5-deoxy-D-ribos-5-yl)-L-homocysteine = (S)-4,5-dihydroxypentane-2,3-dione + L-homocysteine. Involved in the synthesis of autoinducer 2 (AI-2) which is secreted by bacteria and is used to communicate both the cell density and the metabolic potential of the environment. The regulation of gene expression in response to changes in cell density is called quorum sensing. Catalyzes the transformation of S-ribosylhomocysteine (RHC) to homocysteine (HC) and 4,5-dihydroxy-2,3-pentadione (DPD). This Helicobacter acinonychis (strain Sheeba) protein is S-ribosylhomocysteine lyase.